Reading from the N-terminus, the 1446-residue chain is DNA-directed RNA polymerase subunit beta'' (1446 aa).

Residues Cys-217, Cys-285, Cys-292, and Cys-295 each coordinate Zn(2+).

The protein belongs to the RNA polymerase beta' chain family. RpoC2 subfamily. As to quaternary structure, in plastids the minimal PEP RNA polymerase catalytic core is composed of four subunits: alpha, beta, beta', and beta''. When a (nuclear-encoded) sigma factor is associated with the core the holoenzyme is formed, which can initiate transcription. The cofactor is Zn(2+).

It localises to the plastid. It is found in the chloroplast. The enzyme catalyses RNA(n) + a ribonucleoside 5'-triphosphate = RNA(n+1) + diphosphate. DNA-dependent RNA polymerase catalyzes the transcription of DNA into RNA using the four ribonucleoside triphosphates as substrates. The polypeptide is DNA-directed RNA polymerase subunit beta'' (Thalassiosira pseudonana (Marine diatom)).